The sequence spans 211 residues: Dual specificity protein phosphatase 26 (211 aa).

The Tyrosine-protein phosphatase domain occupies 60-207; the sequence is NHADEVWPGL…LLALDRRLRQ (148 aa). C152 functions as the Phosphocysteine intermediate in the catalytic mechanism.

Belongs to the protein-tyrosine phosphatase family. Non-receptor class dual specificity subfamily. As to quaternary structure, interacts with HSF4.

It localises to the cytoplasm. Its subcellular location is the nucleus. The protein resides in the golgi apparatus. It catalyses the reaction O-phospho-L-tyrosyl-[protein] + H2O = L-tyrosyl-[protein] + phosphate. The catalysed reaction is O-phospho-L-seryl-[protein] + H2O = L-seryl-[protein] + phosphate. The enzyme catalyses O-phospho-L-threonyl-[protein] + H2O = L-threonyl-[protein] + phosphate. Its function is as follows. Inactivates MAPK1 and MAPK3 which leads to dephosphorylation of heat shock factor protein 4 and a reduction in its DNA-binding activity. The protein is Dual specificity protein phosphatase 26 (DUSP26) of Pongo abelii (Sumatran orangutan).